The sequence spans 1167 residues: Phenyloxazoline synthase MbtB (1167 aa).

Positions 2 to 78 constitute a Carrier 1 domain; sequence EAVVTSSQTV…AWTRLVGERT (77 aa). Ser-39 carries the O-(pantetheine 4'-phosphoryl)serine modification. Residues 78–100 are disordered; the sequence is TAESPGAATQSGDTAASAGDPDA. The condensation/cyclization stretch occupies residues 98–390; sequence PDAPFPLAPI…SSLMLDVDFT (293 aa). Residues 575-967 form an adenylation region; the sequence is TYAELRERVL…RIAGVEAAVA (393 aa). The 77-residue stretch at 1054–1130 folds into the Carrier 2 domain; the sequence is VPSTALERAL…ALARRLVDHE (77 aa). Ser-1089 carries the post-translational modification O-(pantetheine 4'-phosphoryl)serine.

The protein belongs to the ATP-dependent AMP-binding enzyme family. MbtB subfamily. Pantetheine 4'-phosphate is required as a cofactor. Post-translationally, 4'-phosphopantetheine is transferred from CoA to a specific serine in each of the two carrier protein domains, leading to their activation from apo to holo forms.

It participates in siderophore biosynthesis; mycobactin biosynthesis. Involved in the initial steps of the mycobactin biosynthetic pathway. Putatively couples activated salicylic acid with serine or threonine and cyclizes this precursor to the hydroxyphenyloxazoline ring system present in this class of siderophores. This is Phenyloxazoline synthase MbtB (mbtB) from Mycobacterium sp. (strain MCS).